Here is a 667-residue protein sequence, read N- to C-terminus: DNA ligase (667 aa).

Residues 32–36 (DSEYD), 81–82 (SL), and E110 contribute to the NAD(+) site. Residue K112 is the N6-AMP-lysine intermediate of the active site. NAD(+) is bound by residues R133, E167, K283, and K307. The Zn(2+) site is built by C401, C404, C419, and C424. Positions 586–667 (EGHPDFKDKT…FVQKQNEIEG (82 aa)) constitute a BRCT domain.

It belongs to the NAD-dependent DNA ligase family. LigA subfamily. It depends on Mg(2+) as a cofactor. Requires Mn(2+) as cofactor.

The enzyme catalyses NAD(+) + (deoxyribonucleotide)n-3'-hydroxyl + 5'-phospho-(deoxyribonucleotide)m = (deoxyribonucleotide)n+m + AMP + beta-nicotinamide D-nucleotide.. DNA ligase that catalyzes the formation of phosphodiester linkages between 5'-phosphoryl and 3'-hydroxyl groups in double-stranded DNA using NAD as a coenzyme and as the energy source for the reaction. It is essential for DNA replication and repair of damaged DNA. The sequence is that of DNA ligase from Staphylococcus saprophyticus subsp. saprophyticus (strain ATCC 15305 / DSM 20229 / NCIMB 8711 / NCTC 7292 / S-41).